A 73-amino-acid polypeptide reads, in one-letter code: ATP synthase subunit 9, mitochondrial (73 aa).

A run of 2 helical transmembrane segments spans residues 12–32 and 50–70; these read VAAL…AALI and ILGF…SFLL.

Belongs to the ATPase C chain family. As to quaternary structure, F-type ATPases have 2 components, CF(1) - the catalytic core - and CF(0) - the membrane proton channel. CF(1) has five subunits: alpha(3), beta(3), gamma(1), delta(1), epsilon(1). CF(0) has three main subunits: a, b and c.

The protein resides in the mitochondrion inner membrane. Mitochondrial membrane ATP synthase (F(1)F(0) ATP synthase or Complex V) produces ATP from ADP in the presence of a proton gradient across the membrane which is generated by electron transport complexes of the respiratory chain. F-type ATPases consist of two structural domains, F(1) - containing the extramembraneous catalytic core and F(0) - containing the membrane proton channel, linked together by a central stalk and a peripheral stalk. During catalysis, ATP synthesis in the catalytic domain of F(1) is coupled via a rotary mechanism of the central stalk subunits to proton translocation. Part of the complex F(0) domain. A homomeric c-ring of probably 10 subunits is part of the complex rotary element. The chain is ATP synthase subunit 9, mitochondrial (ATP9) from Mycosarcoma maydis (Corn smut fungus).